We begin with the raw amino-acid sequence, 332 residues long: Ribosomal RNA small subunit methyltransferase H (332 aa).

Residues 36-38 (GGY), D54, F81, D102, and Q109 each bind S-adenosyl-L-methionine.

The protein belongs to the methyltransferase superfamily. RsmH family.

The protein resides in the cytoplasm. It carries out the reaction cytidine(1402) in 16S rRNA + S-adenosyl-L-methionine = N(4)-methylcytidine(1402) in 16S rRNA + S-adenosyl-L-homocysteine + H(+). Functionally, specifically methylates the N4 position of cytidine in position 1402 (C1402) of 16S rRNA. The protein is Ribosomal RNA small subunit methyltransferase H of Nitrobacter winogradskyi (strain ATCC 25391 / DSM 10237 / CIP 104748 / NCIMB 11846 / Nb-255).